A 1192-amino-acid chain; its full sequence is MFCSEKKLREVERIVKANDREYNEKFQYADNRIHTSKYNILTFLPINLFEQFQRVANAYFLCLLILQLIPEISSLTWFTTIVPLVLVITMTAVKDATDDYFRHKSDNQVNNRQSEVLINSKLQNEKWMNVKVGDIIKLENNQFVAADLLLLSSSEPHGLCYVETAELDGETNLKVRHALSVTSELGADISRLAGFDGIVVCEVPNNKLDKFMGILSWKDSKHSLNNEKIILRGCILRNTSWCFGMVIFAGPDTKLMQNSGKTKFKRTSIDRLMNTLVLWIFGFLICLGIILAIGNSIWESQTGDQFRTFLFWNEGEKSSVFSGFLTFWSYIIILNTVVPISLYVSVEVIRLGHSYFINWDRKMYYSRKAIPAVARTTTLNEELGQIEYIFSDKTGTLTQNIMTFKRCSINGRIYGEVHDDLDQKTEITQEKEPVDFSVKSQADREFQFFDHHLMESIKMGDPKVHEFLRLLALCHTVMSEENSAGELIYQVQSPDEGALVTAARNFGFIFKSRTPETITIEELGTLVTYQLLAFLDFNNTRKRMSVIVRNPEGQIKLYSKGADTILFEKLHPSNEVLLSLTSDHLSEFAGEGLRTLAIAYRDLDDKYFKEWHKMLEDANAATEERDERIAGLYEEIERDLMLLGATAVEDKLQEGVIETVTSLSLANIKIWVLTGDKQETAINIGYACNMLTDDMNDVFVIAGNNAVEVREELRKAKQNLFGQNRNFSNGHVVCEKKQQLELDSIVEETITGDYALIINGHSLAHALESDVKNDLLELACMCKTVICCRVTPLQKAQVVELVKKYRNAVTLAIGDGANDVSMIKSAHIGVGISGQEGLQAVLASDYSFAQFRYLQRLLLVHGRWSYFRMCKFLCYFFYKNFAFTLVHFWFGFFCGFSAQTVYDQWFITLFNIVYTSLPVLAMGIFDQDVSDQNSVDCPQLYKPGQLNLLFNKRKFFICVLHGIYTSLVLFFIPYGAFYNVAGEDGQHIADYQSFAVTMATSLVIVVSVQIALDTSYWTFINHVFIWGSIAIYFSILFTMHSNGIFGIFPNQFPFVGNARHSLTQKCIWLVILLTTVASVMPVVAFRFLKVDLYPTLSDQIRRWQKAQKKARPPSSRRPRTRRSSSRRSGYAFAHQEGYGELITSGKNMRAKNPPPTSGLEKTHYNSTSWIENLCKKTTDTVSSFSQDKTVKL.

The Cytoplasmic portion of the chain corresponds to 1–44; the sequence is MFCSEKKLREVERIVKANDREYNEKFQYADNRIHTSKYNILTFL. The chain crosses the membrane as a helical span at residues 45 to 66; that stretch reads PINLFEQFQRVANAYFLCLLIL. Residues 67–72 lie on the Exoplasmic loop side of the membrane; that stretch reads QLIPEI. The helical transmembrane segment at 73 to 92 threads the bilayer; sequence SSLTWFTTIVPLVLVITMTA. Residues 93–276 are Cytoplasmic-facing; it reads VKDATDDYFR…TSIDRLMNTL (184 aa). A helical transmembrane segment spans residues 277-298; the sequence is VLWIFGFLICLGIILAIGNSIW. At 299 to 327 the chain is on the exoplasmic loop side; sequence ESQTGDQFRTFLFWNEGEKSSVFSGFLTF. Residues 328-349 form a helical membrane-spanning segment; the sequence is WSYIIILNTVVPISLYVSVEVI. Over 350 to 871 the chain is Cytoplasmic; it reads RLGHSYFINW…GRWSYFRMCK (522 aa). The active-site 4-aspartylphosphate intermediate is D392. ATP-binding residues include D392, K393, T394, E496, F537, K560, R594, T674, G675, D676, R789, and K795. Mg(2+) is bound at residue D392. Position 394 (T394) interacts with Mg(2+). D815 provides a ligand contact to Mg(2+). Residues N818 and D819 each coordinate ATP. D819 provides a ligand contact to Mg(2+). The chain crosses the membrane as a helical span at residues 872–892; that stretch reads FLCYFFYKNFAFTLVHFWFGF. Residues 893–904 are Exoplasmic loop-facing; sequence FCGFSAQTVYDQ. The chain crosses the membrane as a helical span at residues 905–924; the sequence is WFITLFNIVYTSLPVLAMGI. Topologically, residues 925-954 are cytoplasmic; it reads FDQDVSDQNSVDCPQLYKPGQLNLLFNKRK. The chain crosses the membrane as a helical span at residues 955–976; that stretch reads FFICVLHGIYTSLVLFFIPYGA. Residues 977–990 lie on the Exoplasmic loop side of the membrane; it reads FYNVAGEDGQHIAD. Residues 991-1013 traverse the membrane as a helical segment; it reads YQSFAVTMATSLVIVVSVQIALD. The Cytoplasmic portion of the chain corresponds to 1014–1019; that stretch reads TSYWTF. Residues 1020–1040 traverse the membrane as a helical segment; it reads INHVFIWGSIAIYFSILFTMH. The Exoplasmic loop portion of the chain corresponds to 1041–1060; the sequence is SNGIFGIFPNQFPFVGNARH. A helical membrane pass occupies residues 1061 to 1085; sequence SLTQKCIWLVILLTTVASVMPVVAF. Residues 1086–1192 are Cytoplasmic-facing; sequence RFLKVDLYPT…SFSQDKTVKL (107 aa). Residues 1104–1125 are compositionally biased toward basic residues; sequence QKAQKKARPPSSRRPRTRRSSS. Disordered regions lie at residues 1104–1130 and 1143–1163; these read QKAQKKARPPSSRRPRTRRSSSRRSGY and TSGKNMRAKNPPPTSGLEKTH.

Belongs to the cation transport ATPase (P-type) (TC 3.A.3) family. Type IV subfamily. Component of a P4-ATPase flippase complex which consists of a catalytic alpha subunit and an accessory beta subunit. Interacts with beta subunits TMEM30A and TMEM30B. The cofactor is Mg(2+). As to expression, ubiquitously expressed at moderate levels.

Its subcellular location is the cell membrane. It is found in the golgi apparatus. It catalyses the reaction ATP + H2O + phospholipidSide 1 = ADP + phosphate + phospholipidSide 2.. Its function is as follows. Component of a P4-ATPase flippase complex which catalyzes the hydrolysis of ATP coupled to the transport of aminophospholipids from the outer to the inner leaflet of various membranes and ensures the maintenance of asymmetric distribution of phospholipids. Phospholipid translocation also seems to be implicated in vesicle formation and in uptake of lipid signaling molecules. The protein is Probable phospholipid-transporting ATPase IM (ATP8B4) of Homo sapiens (Human).